The primary structure comprises 179 residues: Endoribonuclease YbeY (179 aa).

The Zn(2+) site is built by histidine 148, histidine 152, and histidine 158.

This sequence belongs to the endoribonuclease YbeY family. It depends on Zn(2+) as a cofactor.

It is found in the cytoplasm. Functionally, single strand-specific metallo-endoribonuclease involved in late-stage 70S ribosome quality control and in maturation of the 3' terminus of the 16S rRNA. This is Endoribonuclease YbeY from Prochlorococcus marinus (strain MIT 9312).